Here is a 398-residue protein sequence, read N- to C-terminus: 1-deoxy-D-xylulose 5-phosphate reductoisomerase (398 aa).

NADPH-binding residues include T11, G12, S13, I14, and N125. A 1-deoxy-D-xylulose 5-phosphate-binding site is contributed by K126. Position 127 (E127) interacts with NADPH. D151 is a Mn(2+) binding site. Residues S152, E153, S186, and H209 each contribute to the 1-deoxy-D-xylulose 5-phosphate site. E153 is a Mn(2+) binding site. NADPH is bound at residue G215. 1-deoxy-D-xylulose 5-phosphate contacts are provided by S222, N227, K228, and E231. E231 is a Mn(2+) binding site.

This sequence belongs to the DXR family. Mg(2+) is required as a cofactor. Requires Mn(2+) as cofactor.

The enzyme catalyses 2-C-methyl-D-erythritol 4-phosphate + NADP(+) = 1-deoxy-D-xylulose 5-phosphate + NADPH + H(+). It participates in isoprenoid biosynthesis; isopentenyl diphosphate biosynthesis via DXP pathway; isopentenyl diphosphate from 1-deoxy-D-xylulose 5-phosphate: step 1/6. Catalyzes the NADPH-dependent rearrangement and reduction of 1-deoxy-D-xylulose-5-phosphate (DXP) to 2-C-methyl-D-erythritol 4-phosphate (MEP). This chain is 1-deoxy-D-xylulose 5-phosphate reductoisomerase, found in Acinetobacter baumannii (strain ATCC 17978 / DSM 105126 / CIP 53.77 / LMG 1025 / NCDC KC755 / 5377).